The following is a 175-amino-acid chain: Large ribosomal subunit protein uL18 (175 aa).

Belongs to the universal ribosomal protein uL18 family. In terms of assembly, part of the 50S ribosomal subunit. Contacts the 5S and 23S rRNAs.

Functionally, this is one of the proteins that bind and probably mediate the attachment of the 5S RNA into the large ribosomal subunit, where it forms part of the central protuberance. In Methanospirillum hungatei JF-1 (strain ATCC 27890 / DSM 864 / NBRC 100397 / JF-1), this protein is Large ribosomal subunit protein uL18.